Here is a 382-residue protein sequence, read N- to C-terminus: Elongation factor Tu (382 aa).

Residues 1 to 7, 62 to 66, and 117 to 120 contribute to the GTP site; these read HVDHGKT, DCPGH, and NKVD. The tr-type G domain maps to 1–190; the sequence is HVDHGKTTLT…AVDEYIPTPQ (190 aa). Residue threonine 7 coordinates Mg(2+).

Belongs to the TRAFAC class translation factor GTPase superfamily. Classic translation factor GTPase family. EF-Tu/EF-1A subfamily. As to quaternary structure, monomer.

The protein resides in the cytoplasm. It catalyses the reaction GTP + H2O = GDP + phosphate + H(+). In terms of biological role, GTP hydrolase that promotes the GTP-dependent binding of aminoacyl-tRNA to the A-site of ribosomes during protein biosynthesis. This is Elongation factor Tu from Chloroflexus aurantiacus.